Reading from the N-terminus, the 70-residue chain is U2-agatoxin-Ao1p (70 aa).

An N-terminal signal peptide occupies residues 1 to 20 (MRAIISLILISAMVFSMIAA). Positions 21-34 (VPXXEGLQLSEDER) are excised as a propeptide. Disulfide bonds link Cys-37-Cys-53, Cys-44-Cys-58, and Cys-52-Cys-68. Position 69 is a leucine amide (Leu-69).

This sequence belongs to the neurotoxin 01 (U2-agtx) family. As to expression, expressed by the venom gland.

It localises to the secreted. Insect active toxin causing rapid but reversible paralysis in crickets. No activity shown in mammals. Does not show effect on mammalian voltage-gated calcium channels. This Agelena orientalis (Funnel-web spider) protein is U2-agatoxin-Ao1p.